The following is a 1257-amino-acid chain: Stromal processing peptidase, chloroplastic (1257 aa).

The N-terminal 142 residues, 1 to 142 (MAASTSTSSL…ASVKRVQLPH (142 aa)), are a transit peptide targeting the chloroplast. His-236 is a binding site for Zn(2+). Glu-239 (proton acceptor) is an active-site residue. His-240 lines the Zn(2+) pocket. Residue Glu-309 is part of the active site. Glu-316 provides a ligand contact to Zn(2+). The tract at residues 1233 to 1257 (EEAGEGYPGVLPMGRGLSTMTRPTT) is disordered.

It belongs to the peptidase M16 family. Requires Zn(2+) as cofactor.

It is found in the plastid. The protein localises to the chloroplast stroma. Its function is as follows. Cleaves presequences (transit peptides) from chloroplastic protein precursors. Initially recognizes a precursor by binding to the C-terminus of its transit peptide and then removes the transit peptide in a single endoproteolytic step. In a next step, pursues the cleavage of transit peptide to a subfragment form. The protein is Stromal processing peptidase, chloroplastic of Pisum sativum (Garden pea).